Consider the following 459-residue polypeptide: DNA-binding protein P3A2 (459 aa).

Positions methionine 1–serine 25 are disordered.

Belongs to the NRF1/Ewg family.

The protein resides in the nucleus. Its function is as follows. Transcriptional regulator that interacts with specific sites in the control region of the cyIIIa actin gene. Also binds specifically to similar target sites located in the regulatory region of the SM50 gene. This is DNA-binding protein P3A2 from Strongylocentrotus purpuratus (Purple sea urchin).